Consider the following 172-residue polypeptide: Large ribosomal subunit protein uL10 (172 aa).

This sequence belongs to the universal ribosomal protein uL10 family. Part of the ribosomal stalk of the 50S ribosomal subunit. The N-terminus interacts with L11 and the large rRNA to form the base of the stalk. The C-terminus forms an elongated spine to which L12 dimers bind in a sequential fashion forming a multimeric L10(L12)X complex.

Functionally, forms part of the ribosomal stalk, playing a central role in the interaction of the ribosome with GTP-bound translation factors. In Rhodospirillum rubrum (strain ATCC 11170 / ATH 1.1.1 / DSM 467 / LMG 4362 / NCIMB 8255 / S1), this protein is Large ribosomal subunit protein uL10.